Consider the following 253-residue polypeptide: Blue-light photoreceptor (253 aa).

Residues 6–79 (QFDVILKALN…AKIRHAINEK (74 aa)) form the PAS domain. Residue cysteine 56 is modified to S-4a-FMN cysteine. Positions 80–133 (STANVLLKNYRKDGTSFMNELTIEPIYDDHEHLYFVGIQKDVTTEHDYQLELEK) constitute a PAC domain. The region spanning 142-253 (STPIVPIKEN…STIKEALQFY (112 aa)) is the STAS domain.

Post-translationally, FMN binds covalently to cysteine after exposure to blue light and this bond is spontaneously broken in the dark.

Functionally, exhibits the same spectroscopical features and blue-light induced photochemistry as plants phototropins, with the reversible formation of a blue-shifted photoproduct, assigned to an FMN-cysteine thiol adduct. Positive regulator in the activation of the general stress transcription factor sigma-B. This Listeria monocytogenes serovar 1/2a (strain ATCC BAA-679 / EGD-e) protein is Blue-light photoreceptor.